Reading from the N-terminus, the 160-residue chain is Cyclic pyranopterin monophosphate synthase (160 aa).

Substrate contacts are provided by residues 74-76 (LSH) and 112-113 (ME). Residue Asp-127 is part of the active site.

The protein belongs to the MoaC family. In terms of assembly, homohexamer; trimer of dimers.

It catalyses the reaction (8S)-3',8-cyclo-7,8-dihydroguanosine 5'-triphosphate = cyclic pyranopterin phosphate + diphosphate. It participates in cofactor biosynthesis; molybdopterin biosynthesis. Functionally, catalyzes the conversion of (8S)-3',8-cyclo-7,8-dihydroguanosine 5'-triphosphate to cyclic pyranopterin monophosphate (cPMP). The sequence is that of Cyclic pyranopterin monophosphate synthase from Geobacter sulfurreducens (strain ATCC 51573 / DSM 12127 / PCA).